The primary structure comprises 130 residues: Small ribosomal subunit protein uS9 (130 aa).

It belongs to the universal ribosomal protein uS9 family.

This chain is Small ribosomal subunit protein uS9, found in Pseudomonas entomophila (strain L48).